The primary structure comprises 121 residues: MARISGVEIPNEKRVVISLTYIYGIGLSTSQKVLSKLNISEDVRTRDLTEEQIKAISTEISNFKVEGELRREVSLNIKRLMEIGCYRGLRHRKGLPVRGQSSKTNARTVKGPRKTVANKKK.

The segment at 94 to 121 (GLPVRGQSSKTNARTVKGPRKTVANKKK) is disordered. Residues 110–121 (KGPRKTVANKKK) show a composition bias toward basic residues.

This sequence belongs to the universal ribosomal protein uS13 family. Part of the 30S ribosomal subunit. Forms a loose heterodimer with protein S19. Forms two bridges to the 50S subunit in the 70S ribosome.

In terms of biological role, located at the top of the head of the 30S subunit, it contacts several helices of the 16S rRNA. In the 70S ribosome it contacts the 23S rRNA (bridge B1a) and protein L5 of the 50S subunit (bridge B1b), connecting the 2 subunits; these bridges are implicated in subunit movement. Contacts the tRNAs in the A and P-sites. This Mesoplasma florum (strain ATCC 33453 / NBRC 100688 / NCTC 11704 / L1) (Acholeplasma florum) protein is Small ribosomal subunit protein uS13.